Here is a 426-residue protein sequence, read N- to C-terminus: Histidine--tRNA ligase (426 aa).

The protein belongs to the class-II aminoacyl-tRNA synthetase family. As to quaternary structure, homodimer.

Its subcellular location is the cytoplasm. It carries out the reaction tRNA(His) + L-histidine + ATP = L-histidyl-tRNA(His) + AMP + diphosphate + H(+). The sequence is that of Histidine--tRNA ligase from Streptococcus gordonii (strain Challis / ATCC 35105 / BCRC 15272 / CH1 / DL1 / V288).